A 192-amino-acid polypeptide reads, in one-letter code: Protein GrpE (192 aa).

Residues 1–20 (MEERNEQVVEEVKEEVKEAQ) show a composition bias toward basic and acidic residues. The disordered stretch occupies residues 1–39 (MEERNEQVVEEVKEEVKEAQVEEAVTSEDSEESVEEKSE). Residues 25–34 (VTSEDSEESV) are compositionally biased toward acidic residues.

It belongs to the GrpE family. Homodimer.

It is found in the cytoplasm. Functionally, participates actively in the response to hyperosmotic and heat shock by preventing the aggregation of stress-denatured proteins, in association with DnaK and GrpE. It is the nucleotide exchange factor for DnaK and may function as a thermosensor. Unfolded proteins bind initially to DnaJ; upon interaction with the DnaJ-bound protein, DnaK hydrolyzes its bound ATP, resulting in the formation of a stable complex. GrpE releases ADP from DnaK; ATP binding to DnaK triggers the release of the substrate protein, thus completing the reaction cycle. Several rounds of ATP-dependent interactions between DnaJ, DnaK and GrpE are required for fully efficient folding. The chain is Protein GrpE from Bacillus cereus (strain ATCC 10987 / NRS 248).